A 498-amino-acid chain; its full sequence is uncharacterized protein (498 aa).

A signal peptide spans 1–26; that stretch reads MEESSMAQASLICLLLSFSIIMLSNA. Residues 27 to 441 lie on the Extracellular side of the membrane; it reads ADISIDCGSS…GEEKSSSNLA (415 aa). 4 N-linked (GlcNAc...) asparagine glycosylation sites follow: Asn44, Asn150, Asn354, and Asn357. Residues 351–439 form a disordered region; the sequence is GSGNGTNSTS…KSGEEKSSSN (89 aa). Gly residues predominate over residues 362–414; sequence SGGGSPSPGGGSGSPPSTGGGSGSPPSTGGGGGSPSKGGGGGKSGGSNNGDGG. The span at 418-436 shows a compositional bias: basic and acidic residues; that stretch reads ASEDEKSADSSGKSGEEKS. Residues 442–462 form a helical membrane-spanning segment; that stretch reads LPLGISLPTLLSLGAGGWGVW. Topologically, residues 463-498 are cytoplasmic; the sequence is KYFIKPRRHPESELPLKQNISLQVNMGNATVVNAGQ.

Its subcellular location is the membrane. This is an uncharacterized protein from Arabidopsis thaliana (Mouse-ear cress).